The following is a 406-amino-acid chain: Argininosuccinate synthase (406 aa).

Residue 8–16 coordinates ATP; that stretch reads AYSGGLDTS. Tyr-86 is an L-citrulline binding site. Gly-116 contacts ATP. Residues Thr-118, Asn-122, and Asp-123 each coordinate L-aspartate. Position 122 (Asn-122) interacts with L-citrulline. The L-citrulline site is built by Arg-126, Ser-174, Glu-259, and Tyr-271.

It belongs to the argininosuccinate synthase family. Type 1 subfamily. Homotetramer.

The protein localises to the cytoplasm. The catalysed reaction is L-citrulline + L-aspartate + ATP = 2-(N(omega)-L-arginino)succinate + AMP + diphosphate + H(+). It functions in the pathway amino-acid biosynthesis; L-arginine biosynthesis; L-arginine from L-ornithine and carbamoyl phosphate: step 2/3. This Lacticaseibacillus paracasei (strain ATCC 334 / BCRC 17002 / CCUG 31169 / CIP 107868 / KCTC 3260 / NRRL B-441) (Lactobacillus paracasei) protein is Argininosuccinate synthase.